The primary structure comprises 79 residues: Conotoxin 1 (79 aa).

The first 22 residues, 1-22, serve as a signal peptide directing secretion; it reads MKLTCVLIITVLFLTASQLITA. Residues 23–46 constitute a propeptide that is removed on maturation; it reads DYSRDQRQYRAVRLGDEMRTFKGA. 3 cysteine pairs are disulfide-bonded: Cys49-Cys62, Cys56-Cys67, and Cys61-Cys77.

This sequence belongs to the conotoxin O1 superfamily. In terms of tissue distribution, expressed by the venom duct.

The protein localises to the secreted. The protein is Conotoxin 1 of Conus vexillum (Flag cone).